A 176-amino-acid polypeptide reads, in one-letter code: ATP-dependent protease subunit HslV (176 aa).

Thr-2 is an active-site residue. The Na(+) site is built by Gly-157, Cys-160, and Thr-163.

It belongs to the peptidase T1B family. HslV subfamily. As to quaternary structure, a double ring-shaped homohexamer of HslV is capped on each side by a ring-shaped HslU homohexamer. The assembly of the HslU/HslV complex is dependent on binding of ATP.

It localises to the cytoplasm. It catalyses the reaction ATP-dependent cleavage of peptide bonds with broad specificity.. Allosterically activated by HslU binding. In terms of biological role, protease subunit of a proteasome-like degradation complex believed to be a general protein degrading machinery. The sequence is that of ATP-dependent protease subunit HslV from Pectobacterium carotovorum subsp. carotovorum (strain PC1).